Here is a 572-residue protein sequence, read N- to C-terminus: Methionine--tRNA ligase (572 aa).

A 'HIGH' region motif is present at residues 11 to 21; it reads PYINGIKHLGN. Cysteine 143, cysteine 146, cysteine 156, and cysteine 159 together coordinate Zn(2+). Positions 346 to 350 match the 'KMSKS' region motif; that stretch reads QFSTS. Residue threonine 349 coordinates ATP.

This sequence belongs to the class-I aminoacyl-tRNA synthetase family. MetG type 1 subfamily. Monomer. The cofactor is Zn(2+).

The protein resides in the cytoplasm. It catalyses the reaction tRNA(Met) + L-methionine + ATP = L-methionyl-tRNA(Met) + AMP + diphosphate. Is required not only for elongation of protein synthesis but also for the initiation of all mRNA translation through initiator tRNA(fMet) aminoacylation. In Paracoccus denitrificans (strain Pd 1222), this protein is Methionine--tRNA ligase.